Consider the following 987-residue polypeptide: Mitotic checkpoint serine/threonine-protein kinase bub-1 (987 aa).

Disordered stretches follow at residues 278 to 385 (RRRH…TSKS) and 574 to 599 (LAAN…KDSS). Residues 350–364 (ERLKIMTAGRKDGNP) are compositionally biased toward basic and acidic residues. The span at 368–380 (STSISSNYSTASA) shows a compositional bias: low complexity. A compositionally biased stretch (polar residues) spans 575-587 (AANQAVQPSVTES). Over residues 588 to 599 (SKPERSDPKDSS) the composition is skewed to basic and acidic residues. Residues 690–987 (LHIQTLIGQG…EACDLAANQK (298 aa)) form the Protein kinase domain. ATP-binding positions include 696-704 (IGQGGYAKV) and lysine 718. Aspartate 814 serves as the catalytic Proton acceptor.

The protein belongs to the protein kinase superfamily. Ser/Thr protein kinase family. BUB1 subfamily. As to quaternary structure, interacts (via kinase domain) with mdf-1 (via coiled coil domain); the interaction recruits mdf-1 to unattached kinetochores during mitosis and between homologous chromosomes in early anaphase of meiosis I. May interact with bub-3; for localization at the kinetochore and the onset of anaphase.

The protein localises to the cytoplasm. The protein resides in the cell cortex. It is found in the nucleus. It localises to the chromosome. Its subcellular location is the centromere. The protein localises to the kinetochore. The enzyme catalyses L-seryl-[protein] + ATP = O-phospho-L-seryl-[protein] + ADP + H(+). The catalysed reaction is L-threonyl-[protein] + ATP = O-phospho-L-threonyl-[protein] + ADP + H(+). Serine/threonine-protein kinase essential for spindle-assembly checkpoint signaling. Plays a key role in the recruitment of the checkpoint proteins bub-3, mdf-1 and mdf-2 to unattached kinetochores. mdf-1 recruitment is independent of bub-1 kinase activity. Has a role in the correct kinetochore localization of the spindly-like protein spdl-1. In addition, during meiotic anaphase I, controls the recruitment of hcp-1/2 and klp-19 to the ring-shaped domain formed between chromosomes. Involved in chromosome alignment, chromosome homolog segregation and spindle assembly. In association with bub-3 at the kinetochore region of chromosomes, promotes the onset on anaphase independently from spindle checkpoint signaling and promotes the formation of stable end-on bipolar attachments of chromosomes. Plays a role in nuclear envelope breakdown. Required maternally during embryogenesis and in the zygote for the postembryonic development of several tissues including ventral cord neurons, gonad, intestine and seam cells. The sequence is that of Mitotic checkpoint serine/threonine-protein kinase bub-1 from Caenorhabditis elegans.